The sequence spans 190 residues: Imidazoleglycerol-phosphate dehydratase (190 aa).

The protein belongs to the imidazoleglycerol-phosphate dehydratase family.

It localises to the cytoplasm. The enzyme catalyses D-erythro-1-(imidazol-4-yl)glycerol 3-phosphate = 3-(imidazol-4-yl)-2-oxopropyl phosphate + H2O. It functions in the pathway amino-acid biosynthesis; L-histidine biosynthesis; L-histidine from 5-phospho-alpha-D-ribose 1-diphosphate: step 6/9. This chain is Imidazoleglycerol-phosphate dehydratase, found in Sulfurovum sp. (strain NBC37-1).